The primary structure comprises 300 residues: Ribosomal RNA small subunit methyltransferase H (300 aa).

S-adenosyl-L-methionine-binding positions include 36–38, D55, L89, D103, and Q110; that span reads GGH.

This sequence belongs to the methyltransferase superfamily. RsmH family.

The protein resides in the cytoplasm. It carries out the reaction cytidine(1402) in 16S rRNA + S-adenosyl-L-methionine = N(4)-methylcytidine(1402) in 16S rRNA + S-adenosyl-L-homocysteine + H(+). Its function is as follows. Specifically methylates the N4 position of cytidine in position 1402 (C1402) of 16S rRNA. This is Ribosomal RNA small subunit methyltransferase H from Thermotoga neapolitana (strain ATCC 49049 / DSM 4359 / NBRC 107923 / NS-E).